Here is a 300-residue protein sequence, read N- to C-terminus: MNAAKNTLSIKSIFLDFKEITKAGLAISVLFSSIAGYLLGVNDEHPFKWSVLIVLAIGGYCMVGASNAYNQVIEKDIDSLMDRTKNRPVASGRMSKVTALIVASLLTIIGIVLLYTINAKSAMFAAISIFLYTSIYTPLKTVTSLSVFVGAFPGAIPFMLGWVAATGEFGIEAGTLFLIQFFWQFPHFWSIGWFLYDDYAKAGIFMLPTGNKDRKTALQVILYTIWLIIASLLPVLGYTGQLFISPVAAVLVFLLGLWMLFYAVRLYQLRTPKAARTLMLVSVSYISLLQIVFIVDKFLR.

9 helical membrane-spanning segments follow: residues I20–G40, W49–Y69, V97–I117, A122–V142, L145–A165, L176–Y196, A217–G237, L242–Y262, and L278–F298.

Belongs to the UbiA prenyltransferase family. Protoheme IX farnesyltransferase subfamily.

It localises to the cell inner membrane. The enzyme catalyses heme b + (2E,6E)-farnesyl diphosphate + H2O = Fe(II)-heme o + diphosphate. Its pathway is porphyrin-containing compound metabolism; heme O biosynthesis; heme O from protoheme: step 1/1. Converts heme B (protoheme IX) to heme O by substitution of the vinyl group on carbon 2 of heme B porphyrin ring with a hydroxyethyl farnesyl side group. The polypeptide is Protoheme IX farnesyltransferase (Flavobacterium johnsoniae (strain ATCC 17061 / DSM 2064 / JCM 8514 / BCRC 14874 / CCUG 350202 / NBRC 14942 / NCIMB 11054 / UW101) (Cytophaga johnsonae)).